The following is a 261-amino-acid chain: Small ribosomal subunit protein uS2 (261 aa).

Residues 224–261 (GRQGEDDEAVQQEEVAEGVSKDSLEDLKKTVEEGSNEE) are disordered. The segment covering 228-239 (EDDEAVQQEEVA) has biased composition (acidic residues). The span at 242 to 255 (VSKDSLEDLKKTVE) shows a compositional bias: basic and acidic residues.

This sequence belongs to the universal ribosomal protein uS2 family.

In Pediococcus acidilactici, this protein is Small ribosomal subunit protein uS2 (rpsB).